A 362-amino-acid polypeptide reads, in one-letter code: 3-dehydroquinate synthase (362 aa).

Residues Asp70–Lys75, Gly104–Asp108, Thr128–Thr129, Lys141, Lys150, and Thr168–Thr171 each bind NAD(+). Glu183, His246, and His263 together coordinate Zn(2+).

This sequence belongs to the sugar phosphate cyclases superfamily. Dehydroquinate synthase family. It depends on Co(2+) as a cofactor. The cofactor is Zn(2+). NAD(+) is required as a cofactor.

Its subcellular location is the cytoplasm. The catalysed reaction is 7-phospho-2-dehydro-3-deoxy-D-arabino-heptonate = 3-dehydroquinate + phosphate. It functions in the pathway metabolic intermediate biosynthesis; chorismate biosynthesis; chorismate from D-erythrose 4-phosphate and phosphoenolpyruvate: step 2/7. In terms of biological role, catalyzes the conversion of 3-deoxy-D-arabino-heptulosonate 7-phosphate (DAHP) to dehydroquinate (DHQ). The chain is 3-dehydroquinate synthase from Haemophilus influenzae (strain 86-028NP).